Reading from the N-terminus, the 591-residue chain is Ferric-chelate reductase 1 (591 aa).

A helical transmembrane segment spans residues 6–26 (FTVSAFILLLHVSFVANYPSG). One can recognise a Reelin domain in the interval 13-179 (LLLHVSFVAN…FTTPEATIAP (167 aa)). 5 N-linked (GlcNAc...) asparagine glycosylation sites follow: N50, N85, N308, N321, and N353. The DOMON domain occupies 216–331 (ERACVLLSFT…ASYYIFVADG (116 aa)). The Cytochrome b561 domain occupies 335 to 533 (DGRIHKHSQQ…VGTEIILEIH (199 aa)). A helical membrane pass occupies residues 372–392 (VHGALMFVAWMTTVSVGVLIA). 2 residues coordinate heme b: H373 and H413. The next 2 helical transmembrane spans lie at 416-436 (LMLT…IYRG) and 445-465 (HPYL…LAAF). Positions 445 and 481 each coordinate heme b. Helical transmembrane passes span 490-510 (IIAV…LPGP), 514-534 (YAMI…EIHA), and 568-588 (VVLA…LSAI).

It belongs to the FRRS1 family. Requires heme b as cofactor.

It localises to the membrane. Its function is as follows. Ferric-chelate reductases reduce Fe(3+) to Fe(2+) before its transport from the endosome to the cytoplasm. The protein is Ferric-chelate reductase 1 (FRRS1) of Bos taurus (Bovine).